The primary structure comprises 578 residues: GRAM domain-containing protein 4 (578 aa).

Residues 83 to 135 (HLEIALLEKHFLQEELRKLREETNIDTLKQELEKERQRRTELEQKITDIAKTR) adopt a coiled-coil conformation. The segment at 132-157 (AKTRTDESATQQLSKGPSQTNGADKQ) is disordered. Polar residues predominate over residues 139 to 154 (SATQQLSKGPSQTNGA). A run of 3 helical transmembrane segments spans residues 236 to 256 (IAFIIYMNAVWHGWAIPMFLF), 334 to 354 (MTQKLYIGLWAAFVASCFFHY), and 356 to 376 (TIGLCMGLYAGIKFFLIDFIF). In terms of domain architecture, GRAM spans 446 to 524 (SSFHEIFSLL…TDITDIQKYK (79 aa)).

The protein localises to the mitochondrion membrane. It is found in the endoplasmic reticulum membrane. Plays a role as a mediator of e2f1-induced apoptosis in the absence of p53/TP53. The polypeptide is GRAM domain-containing protein 4 (gramd4) (Xenopus laevis (African clawed frog)).